We begin with the raw amino-acid sequence, 73 residues long: Large ribosomal subunit protein bL31 (73 aa).

Zn(2+) contacts are provided by Cys16, Cys18, Cys36, and Cys39.

The protein belongs to the bacterial ribosomal protein bL31 family. Type A subfamily. As to quaternary structure, part of the 50S ribosomal subunit. It depends on Zn(2+) as a cofactor.

In terms of biological role, binds the 23S rRNA. This chain is Large ribosomal subunit protein bL31, found in Citrifermentans bemidjiense (strain ATCC BAA-1014 / DSM 16622 / JCM 12645 / Bem) (Geobacter bemidjiensis).